Consider the following 152-residue polypeptide: Large ribosomal subunit protein bL9 (152 aa).

The protein belongs to the bacterial ribosomal protein bL9 family.

Its function is as follows. Binds to the 23S rRNA. The sequence is that of Large ribosomal subunit protein bL9 from Coxiella burnetii (strain Dugway 5J108-111).